A 494-amino-acid polypeptide reads, in one-letter code: UDP-N-acetylmuramoyl-L-alanyl-D-glutamate--2,6-diaminopimelate ligase (494 aa).

Residue Ser32 coordinates UDP-N-acetyl-alpha-D-muramoyl-L-alanyl-D-glutamate. 112-118 (GTNGKTT) contacts ATP. UDP-N-acetyl-alpha-D-muramoyl-L-alanyl-D-glutamate contacts are provided by residues Asn153, 154–155 (TT), Ser181, and Arg189. Residue Lys221 is modified to N6-carboxylysine. Meso-2,6-diaminopimelate is bound by residues Arg383, 407 to 410 (DNPR), Gly459, and Glu463. The Meso-diaminopimelate recognition motif motif lies at 407–410 (DNPR).

It belongs to the MurCDEF family. MurE subfamily. Requires Mg(2+) as cofactor. Carboxylation is probably crucial for Mg(2+) binding and, consequently, for the gamma-phosphate positioning of ATP.

It is found in the cytoplasm. The catalysed reaction is UDP-N-acetyl-alpha-D-muramoyl-L-alanyl-D-glutamate + meso-2,6-diaminopimelate + ATP = UDP-N-acetyl-alpha-D-muramoyl-L-alanyl-gamma-D-glutamyl-meso-2,6-diaminopimelate + ADP + phosphate + H(+). It participates in cell wall biogenesis; peptidoglycan biosynthesis. Its function is as follows. Catalyzes the addition of meso-diaminopimelic acid to the nucleotide precursor UDP-N-acetylmuramoyl-L-alanyl-D-glutamate (UMAG) in the biosynthesis of bacterial cell-wall peptidoglycan. This Solibacter usitatus (strain Ellin6076) protein is UDP-N-acetylmuramoyl-L-alanyl-D-glutamate--2,6-diaminopimelate ligase.